The primary structure comprises 457 residues: Reticulon-like protein B18 (457 aa).

The tract at residues 94-183 is disordered; that stretch reads AAVTARRSKT…SPSSDQPQDV (90 aa). Residues 124–136 are compositionally biased toward basic and acidic residues; it reads LRSEAMVDTKENT. Residues 149 to 163 show a composition bias toward basic residues; it reads NQRKQKKLGRSKKEK. The segment covering 166–183 has biased composition (low complexity); the sequence is SVPLLASPSPSSDQPQDV. The 191-residue stretch at 195-385 folds into the Reticulon domain; that stretch reads ISDLIMWRDV…AFWNLTSLKT (191 aa). 4 helical membrane-spanning segments follow: residues 208-228, 230-250, 314-334, and 377-397; these read TLWFGFGCICFLSTCFAAKGF, FSVFSAISYLGLLFLGVSFLS, YGYLITLWRLCAFGFFLSFTI, and FWNLTSLKTRFIAVFIIVVVI. Positions 407 to 457 are disordered; the sequence is DSEDEEEKKQQEKTHPEQQKSPEDKSTSPRSAEEEQALVLVAETKAPKKLY. The span at 413–439 shows a compositional bias: basic and acidic residues; the sequence is EKKQQEKTHPEQQKSPEDKSTSPRSAE.

It localises to the endoplasmic reticulum membrane. The protein is Reticulon-like protein B18 (RTNLB18) of Arabidopsis thaliana (Mouse-ear cress).